Reading from the N-terminus, the 161-residue chain is N5-carboxyaminoimidazole ribonucleotide mutase (161 aa).

The substrate site is built by S9, D12, and R39.

Belongs to the AIR carboxylase family. Class I subfamily.

It catalyses the reaction 5-carboxyamino-1-(5-phospho-D-ribosyl)imidazole + H(+) = 5-amino-1-(5-phospho-D-ribosyl)imidazole-4-carboxylate. It functions in the pathway purine metabolism; IMP biosynthesis via de novo pathway; 5-amino-1-(5-phospho-D-ribosyl)imidazole-4-carboxylate from 5-amino-1-(5-phospho-D-ribosyl)imidazole (N5-CAIR route): step 2/2. Functionally, catalyzes the conversion of N5-carboxyaminoimidazole ribonucleotide (N5-CAIR) to 4-carboxy-5-aminoimidazole ribonucleotide (CAIR). This Aliivibrio fischeri (strain ATCC 700601 / ES114) (Vibrio fischeri) protein is N5-carboxyaminoimidazole ribonucleotide mutase.